The chain runs to 216 residues: Phosphoenolpyruvate guanylyltransferase (216 aa).

Phosphoenolpyruvate-binding residues include Thr-143, Gly-159, and Ser-162.

Belongs to the CofC family.

It carries out the reaction phosphoenolpyruvate + GTP + H(+) = enolpyruvoyl-2-diphospho-5'-guanosine + diphosphate. The protein operates within cofactor biosynthesis; coenzyme F420 biosynthesis. Guanylyltransferase that catalyzes the activation of phosphoenolpyruvate (PEP) as enolpyruvoyl-2-diphospho-5'-guanosine, via the condensation of PEP with GTP. It is involved in the biosynthesis of coenzyme F420, a hydride carrier cofactor. The protein is Phosphoenolpyruvate guanylyltransferase of Streptomyces scabiei (strain 87.22).